The following is a 370-amino-acid chain: Adaptive-response sensory kinase SasA (370 aa).

In terms of domain architecture, Histidine kinase spans 152 to 365; sequence MVAHELRTPL…CFYLTVPVWQ (214 aa). Position 155 is a phosphohistidine; by autocatalysis (histidine 155).

As to quaternary structure, homooligomerizes. Interacts with KaiC. Participates in the KaiBC complex, whose core is composed of a KaiC homohexamer and 6 KaiB.

It catalyses the reaction ATP + protein L-histidine = ADP + protein N-phospho-L-histidine.. Member of the two-component regulatory system SasA/RpaA involved in genome-wide circadian gene expression. One of several clock output pathways. Participates in the Kai clock protein complex, the main circadian regulator in cyanobacteria, via its interaction with KaiC. KaiC enhances the autophosphorylation activity of SasA, which then transfers its phosphate group to RpaA to activate it. In addition to its output function, recruits fold-shifted KaiB (KaiB(fs)) to KaiC to cooperatively form the KaiB(6):KaiC(6) complex (independent of SasA kinase activity). Required for robustness of the circadian rhythm of gene expression and is involved in clock output, also required for adaptation to light/dark cycles. The polypeptide is Adaptive-response sensory kinase SasA (Prochlorococcus marinus (strain MIT 9303)).